We begin with the raw amino-acid sequence, 439 residues long: GTPase Obg (439 aa).

Positions 5 to 164 constitute an Obg domain; sequence TDFFDQATIV…LTLELELKML (160 aa). The region spanning 165-335 is the OBG-type G domain; it reads ADVGLVGFPN…LLQRVAELLR (171 aa). GTP is bound by residues 171–178, 196–200, 217–220, 287–290, and 316–318; these read GFPNAGKS, FTTLT, DIPG, NKAD, and SAA. Positions 178 and 198 each coordinate Mg(2+). A disordered region spans residues 337–359; the sequence is DPPPQRDPVDPDEPPLEWPLPPV. Residues 356 to 433 enclose the OCT domain; the sequence is LPPVDENAFT…IGRAELVWDD (78 aa).

The protein belongs to the TRAFAC class OBG-HflX-like GTPase superfamily. OBG GTPase family. Monomer. The cofactor is Mg(2+).

It is found in the cytoplasm. Its function is as follows. An essential GTPase which binds GTP, GDP and possibly (p)ppGpp with moderate affinity, with high nucleotide exchange rates and a fairly low GTP hydrolysis rate. Plays a role in control of the cell cycle, stress response, ribosome biogenesis and in those bacteria that undergo differentiation, in morphogenesis control. The protein is GTPase Obg of Chloroflexus aggregans (strain MD-66 / DSM 9485).